Here is a 593-residue protein sequence, read N- to C-terminus: NADH-quinone oxidoreductase subunit C/D (593 aa).

The segment at 1–184 is NADH dehydrogenase I subunit C; sequence MTADNAIFIP…DPYSLTLAKQ (184 aa). Residues 208-593 form an NADH dehydrogenase I subunit D region; it reads DYMFLNLGPN…IDFVMADVDR (386 aa).

It in the N-terminal section; belongs to the complex I 30 kDa subunit family. This sequence in the C-terminal section; belongs to the complex I 49 kDa subunit family. As to quaternary structure, NDH-1 is composed of 13 different subunits. Subunits NuoB, CD, E, F, and G constitute the peripheral sector of the complex.

It localises to the cell inner membrane. The enzyme catalyses a quinone + NADH + 5 H(+)(in) = a quinol + NAD(+) + 4 H(+)(out). In terms of biological role, NDH-1 shuttles electrons from NADH, via FMN and iron-sulfur (Fe-S) centers, to quinones in the respiratory chain. The immediate electron acceptor for the enzyme in this species is believed to be ubiquinone. Couples the redox reaction to proton translocation (for every two electrons transferred, four hydrogen ions are translocated across the cytoplasmic membrane), and thus conserves the redox energy in a proton gradient. This is NADH-quinone oxidoreductase subunit C/D from Pseudomonas putida (strain W619).